The following is a 1044-amino-acid chain: Diacylglycerol lipase-alpha (1044 aa).

Residues 1-22 (MPGIVVFRRRWSVGSDDLVLPA) are Cytoplasmic-facing. A helical transmembrane segment spans residues 23 to 43 (IFLFLLHTTWFVILSVVLFGL). The Extracellular segment spans residues 44 to 60 (VYNPHEACSLNLVDHGR). A helical transmembrane segment spans residues 61–81 (GYLGILLSCMIAEMAIIWLSM). At 82-101 (RGGILYTEPRDSMQYVLYVR) the chain is on the cytoplasmic side. A helical membrane pass occupies residues 102–122 (LAILVIEFIYAIVGIVWLTQY). Over 123 to 136 (YTSCNDLTAKNVTL) the chain is Extracellular. An N-linked (GlcNAc...) asparagine glycan is attached at N133. Residues 137-157 (GMVVCNWVVILSVCITVLCVF) traverse the membrane as a helical segment. Residues 158–1044 (DPTGRTFVKL…KQDDLVISAR (887 aa)) lie on the Cytoplasmic side of the membrane. Residues S472 and D524 each act as charge relay system in the active site. S728, S730, S733, S744, S784, S786, S808, S810, S835, S849, and S954 each carry phosphoserine. Residues 848-897 (LSKHSQDTQPLEAALGSGGVTPERPPSATIEEEEAAGGSEGGGVAPRGEL) are disordered. A disordered region spans residues 1013–1044 (QECLATDKIRTSTPTGHGASPTKQDDLVISAR). T1025 is subject to Phosphothreonine.

It belongs to the AB hydrolase superfamily. Lipase family. As to quaternary structure, interacts (via C-terminal) with CAMK2A; leading to the phosphorylation and inhibition of DAGLA enzymatic activity. Interacts (via PPXXF motif) with HOMER1 and HOMER2; this interaction is required for DAGLA membrane localization. Ca(2+) serves as cofactor. In terms of processing, phosphorylated at Ser-784 and Ser-810 by CAMK2A; phosphorylation by CAMK2A inhibits diacylglycerol lipase activity. In terms of tissue distribution, highly expressed by principal cells in the hippocampus. In embryonic brains, it is present in axonal tracts, while in adults it localizes to dendritic fields, correlating with the developmental change in requirement for 2-AG synthesis from the pre- to the postsynaptic compartment. Concentrated in heads of dendritic spines throughout the hippocampal formation. Highly compartmentalized into a wide perisynaptic annulus around the postsynaptic density of axospinous contacts but not intrasynaptically (at protein level).

Its subcellular location is the cell membrane. It is found in the cell projection. The protein localises to the dendritic spine membrane. It localises to the postsynaptic density membrane. The protein resides in the early endosome membrane. It carries out the reaction a 1,2-diacyl-sn-glycerol + H2O = a 2-acylglycerol + a fatty acid + H(+). The catalysed reaction is 1-octadecanoyl-2-(5Z,8Z,11Z,14Z-eicosatetraenoyl)-sn-glycerol + H2O = 2-(5Z,8Z,11Z,14Z-eicosatetraenoyl)-glycerol + octadecanoate + H(+). It catalyses the reaction 1,2-di-(9Z-octadecenoyl)-sn-glycerol + H2O = 2-(9Z-octadecenoyl)-glycerol + (9Z)-octadecenoate + H(+). The enzyme catalyses 1-(9Z-octadecenoyl)-2-(5Z,8Z,11Z,14Z-eicosatetraenoyl)-sn-glycerol + H2O = 2-(5Z,8Z,11Z,14Z-eicosatetraenoyl)-glycerol + (9Z)-octadecenoate + H(+). It carries out the reaction 1-(9Z-octadecenoyl)-2-octadecanoyl-sn-glycerol + H2O = 2-octadecanoylglycerol + (9Z)-octadecenoate + H(+). The catalysed reaction is 1-(9Z-octadecenoyl)-2-(9Z,12Z-octadecadienoyl)-sn-glycerol + H2O = 2-(9Z,12Z-octadecadienoyl)-glycerol + (9Z)-octadecenoate + H(+). It catalyses the reaction 1-(9Z-octadecenoyl)-2-O-(5Z,8Z,11Z,14Z-eicosatetraenyl)-sn-glycerol + H2O = 2-O-(5Z,8Z,11Z,14Z)-eicosatetraenylglycerol + (9Z)-octadecenoate + H(+). Its activity is regulated as follows. Inhibited by 1,2,3-triazole urea covalent inhibitor KT172, DH376 and DO34. Inhibited by p-hydroxy-mercuri-benzoate and HgCl(2), but not to PMSF. Also inhibited by RHC80267. Diacylglycerol lipase activity is inhibited by the phosphorylation of Ser-784 and Ser-810 by CAMK2A. Serine hydrolase that hydrolyzes arachidonic acid-esterified diacylglycerols (DAGs) to produce the principal endocannabinoid (eCB), 2-arachidonoylglycerol (2-AG). Preferentially hydrolyzes sn-1 fatty acids from diacylglycerols (DAG) that contain arachidonic acid (AA) esterified at the sn-2 position to biosynthesize 2-AG. Has negligible activity against other lipids including monoacylglycerols and phospholipids. Plays a key role in regulating 2-AG signaling in the central nervous system (CNS). Controls the activity of 2-AG as a retrograde messenger at neuronal synapses. Supports axonal growth during development and adult neurogenesis. Plays a role for eCB signaling in the physiological regulation of anxiety and depressive behaviors. Also regulates neuroinflammatory responses in the brain, in particular, LPS-induced microglial activation. This is Diacylglycerol lipase-alpha (Dagla) from Mus musculus (Mouse).